A 271-amino-acid chain; its full sequence is NADPH-dependent 7-cyano-7-deazaguanine reductase (271 aa).

Substrate is bound at residue 81–83; it reads IES. Residue 83 to 84 participates in NADPH binding; sequence SK. Cys-177 acts as the Thioimide intermediate in catalysis. The active-site Proton donor is the Asp-184. 216-217 is a binding site for substrate; it reads HE. 245-246 provides a ligand contact to NADPH; the sequence is RG.

Belongs to the GTP cyclohydrolase I family. QueF type 2 subfamily. In terms of assembly, homodimer.

The protein resides in the cytoplasm. The enzyme catalyses 7-aminomethyl-7-carbaguanine + 2 NADP(+) = 7-cyano-7-deazaguanine + 2 NADPH + 3 H(+). It functions in the pathway tRNA modification; tRNA-queuosine biosynthesis. In terms of biological role, catalyzes the NADPH-dependent reduction of 7-cyano-7-deazaguanine (preQ0) to 7-aminomethyl-7-deazaguanine (preQ1). This Xanthomonas campestris pv. campestris (strain 8004) protein is NADPH-dependent 7-cyano-7-deazaguanine reductase.